A 196-amino-acid chain; its full sequence is GTP cyclohydrolase 1 (196 aa).

Zn(2+) is bound by residues C86, H89, and C157.

This sequence belongs to the GTP cyclohydrolase I family. As to quaternary structure, toroid-shaped homodecamer, composed of two pentamers of five dimers.

The catalysed reaction is GTP + H2O = 7,8-dihydroneopterin 3'-triphosphate + formate + H(+). The protein operates within cofactor biosynthesis; 7,8-dihydroneopterin triphosphate biosynthesis; 7,8-dihydroneopterin triphosphate from GTP: step 1/1. The protein is GTP cyclohydrolase 1 of Parabacteroides distasonis (strain ATCC 8503 / DSM 20701 / CIP 104284 / JCM 5825 / NCTC 11152).